Here is a 29-residue protein sequence, read N- to C-terminus: Inorganic pyrophosphatase (29 aa).

It is found in the periplasm. It carries out the reaction diphosphate + H2O = 2 phosphate + H(+). Functionally, inorganic pyrophosphatase is an essential enzyme for the activation of sulfate by sulfate reducing bacteria. This is a high activity pyrophosphatase. The protein is Inorganic pyrophosphatase of Nitratidesulfovibrio vulgaris (strain ATCC 29579 / DSM 644 / CCUG 34227 / NCIMB 8303 / VKM B-1760 / Hildenborough) (Desulfovibrio vulgaris).